Reading from the N-terminus, the 320-residue chain is Zinc finger Ran-binding domain-containing protein 2 (320 aa).

Position 9 is a phosphoserine (Ser9). The segment at 9 to 40 adopts a RanBP2-type 1 zinc-finger fold; sequence SDGDWICPDKKCGNVNFARRTSCNRCGREKTT. An N6-acetyllysine mark is found at Lys18, Lys54, and Lys92. The segment at 65 to 94 adopts a RanBP2-type 2 zinc-finger fold; sequence SANDWQCKTCSNVNWARRSECNMCNTPKYA. Residues 117–320 are disordered; the sequence is REESDGEYDE…QVIGENTKQP (204 aa). Phosphoserine is present on residues Ser120, Ser153, Ser181, Ser188, and Ser193. Positions 150–163 are enriched in acidic residues; the sequence is DKESEGEEEDEDED. The tract at residues 151-320 is required for nuclear targeting; that stretch reads KESEGEEEDE…QVIGENTKQP (170 aa). Over residues 196–210 the composition is skewed to basic residues; the sequence is KKSNRRSRSKSRSSH. 2 stretches are compositionally biased toward low complexity: residues 211 to 224 and 232 to 242; these read SRSS…SSSR and RSSSSSQSRSR. Positions 251–273 are enriched in basic residues; it reads SRGSKSRSSSRSHRGSSSPRKRS.

It belongs to the ZRANB2 family. As to quaternary structure, interacts with the C-terminal half of SNRP70/U1-70K, the Arg/Ser-rich domain of AKAP17A as well as with U2AF1 and CLK1. In terms of processing, phosphorylated on Ser-310 upon DNA damage, probably by ATM or ATR.

It is found in the nucleus. Functionally, splice factor required for alternative splicing of TRA2B/SFRS10 transcripts. Binds to ssRNA containing the consensus sequence 5'-AGGUAA-3'. May interfere with constitutive 5'-splice site selection. This chain is Zinc finger Ran-binding domain-containing protein 2, found in Pongo abelii (Sumatran orangutan).